A 796-amino-acid polypeptide reads, in one-letter code: Protein translocase subunit SecA 2 (796 aa).

ATP-binding positions include Q84, 102–106 (GEGKT), and D496.

Belongs to the SecA family. Monomer and homodimer. Part of the essential Sec protein translocation apparatus which comprises SecA, SecYEG and auxiliary proteins SecDF. Other proteins may also be involved.

The protein resides in the cell membrane. It is found in the cytoplasm. The enzyme catalyses ATP + H2O + cellular proteinSide 1 = ADP + phosphate + cellular proteinSide 2.. Its function is as follows. Part of the Sec protein translocase complex. Interacts with the SecYEG preprotein conducting channel. Has a central role in coupling the hydrolysis of ATP to the transfer of proteins into and across the cell membrane, serving as an ATP-driven molecular motor driving the stepwise translocation of polypeptide chains across the membrane. This chain is Protein translocase subunit SecA 2, found in Staphylococcus epidermidis (strain ATCC 12228 / FDA PCI 1200).